The primary structure comprises 506 residues: MRDPLTDCPYNKVYKNLKEFSQNGENFCKQVTSVLQQRANLEISYAKGLQKLASKLSKALQNTRKSCVSSAWAWASEGMKSTADLHQKLGKAIELEAIKPTYQVLNVQEKKRKSLDNEVEKTANLVISNWNQQIKAKKKLMVSTKKHEALFQLVESSKQSMTEKEKRKLLNKLTKSTEKLEKEDENYYQKNMAGYSTRLKWENTLENCYQSILELEKERIQLLCNNLNQYSQHISLFGQTLTTCHTQIHCAISKIDIEKDIQAVMEETAILSTENKSEFLLTDYFEEDPNSAMDKERRKSLLKPKLLRLQRDIEKASKDKEGLERMLKTYSSTSSFSDAKSQKDTAALMDENNLKLDLLEANSYKLSSMLAELEQRPQPSHPCSNSIFRWREKEHTHSYVKISRPFLMKRLENIVSKASSGGQSNPGSSTPAPGAAQLSSRLCKALYSFQARQDDELNLEKGDIVIIHEKKEGGWWFGSLNGKKGHFPAAYVEELPSNAGNTATKA.

An F-BAR domain is found at Met-1–Asp-260. Ser-114 carries the post-translational modification Phosphoserine. A coiled-coil region spans residues Ser-160–Leu-222. In terms of domain architecture, REM-1 spans Ala-292–Glu-372. One can recognise an SH3 domain in the interval Leu-438–Ser-497. Position 479 is a phosphoserine (Ser-479).

Homotrimer. Interacts with DAB2. Interacts with NOS3, DNM2, WASL and CAV1. Interacts (via SH3 domain) with DNM2; this interaction allows the recruitment of NOS3 to dynamin-positive structures. As to expression, expressed at highest levels in heart, kidney, placenta and lung, and at lowest levels in brain, thymus and spleen. Present in vascular endothelial cells and placenta. Over-expressed in placenta from women with pre-eclampsia (at protein level).

Its subcellular location is the cell membrane. It localises to the cytoplasmic vesicle. It is found in the cytoplasm. The protein localises to the cytoskeleton. The protein resides in the nucleus. In terms of biological role, multivalent adapter protein which may decrease NOS3 activity by inducing its translocation away from the plasma membrane. This Homo sapiens (Human) protein is Nostrin.